A 545-amino-acid polypeptide reads, in one-letter code: Chaperonin GroEL (545 aa).

Residues 30–33 (TLGP), lysine 51, 87–91 (DGTTT), glycine 415, and aspartate 495 each bind ATP.

Belongs to the chaperonin (HSP60) family. As to quaternary structure, forms a cylinder of 14 subunits composed of two heptameric rings stacked back-to-back. Interacts with the co-chaperonin GroES.

Its subcellular location is the cytoplasm. The catalysed reaction is ATP + H2O + a folded polypeptide = ADP + phosphate + an unfolded polypeptide.. Functionally, together with its co-chaperonin GroES, plays an essential role in assisting protein folding. The GroEL-GroES system forms a nano-cage that allows encapsulation of the non-native substrate proteins and provides a physical environment optimized to promote and accelerate protein folding. The sequence is that of Chaperonin GroEL from Shewanella putrefaciens (strain CN-32 / ATCC BAA-453).